Here is a 903-residue protein sequence, read N- to C-terminus: Alanine--tRNA ligase (903 aa).

His591, His595, Cys695, and His699 together coordinate Zn(2+).

Belongs to the class-II aminoacyl-tRNA synthetase family. It depends on Zn(2+) as a cofactor.

The protein resides in the cytoplasm. It catalyses the reaction tRNA(Ala) + L-alanine + ATP = L-alanyl-tRNA(Ala) + AMP + diphosphate. Functionally, catalyzes the attachment of alanine to tRNA(Ala) in a two-step reaction: alanine is first activated by ATP to form Ala-AMP and then transferred to the acceptor end of tRNA(Ala). Also edits incorrectly charged Ser-tRNA(Ala) and Gly-tRNA(Ala) via its editing domain. The chain is Alanine--tRNA ligase from Methanosphaera stadtmanae (strain ATCC 43021 / DSM 3091 / JCM 11832 / MCB-3).